We begin with the raw amino-acid sequence, 355 residues long: GTPase Obg (355 aa).

Residues 1-159 (MKFLDEAKVY…KTIWLRLKLI (159 aa)) enclose the Obg domain. The region spanning 160–327 (ADAGLVGLPN…ALRALRDIIV (168 aa)) is the OBG-type G domain. GTP-binding positions include 166–173 (GLPNAGKS), 191–195 (FTTLH), 212–215 (DIPG), 279–282 (SQID), and 308–310 (SAA). Residues Ser173 and Thr193 each contribute to the Mg(2+) site. Residues 333–355 (GDTALPDRSMPHESEVEEEDDRL) form a disordered region.

It belongs to the TRAFAC class OBG-HflX-like GTPase superfamily. OBG GTPase family. As to quaternary structure, monomer. The cofactor is Mg(2+).

Its subcellular location is the cytoplasm. In terms of biological role, an essential GTPase which binds GTP, GDP and possibly (p)ppGpp with moderate affinity, with high nucleotide exchange rates and a fairly low GTP hydrolysis rate. Plays a role in control of the cell cycle, stress response, ribosome biogenesis and in those bacteria that undergo differentiation, in morphogenesis control. This chain is GTPase Obg, found in Agrobacterium fabrum (strain C58 / ATCC 33970) (Agrobacterium tumefaciens (strain C58)).